The sequence spans 404 residues: Nuclear receptor subfamily 2 group F member 6 (404 aa).

The span at 1–15 shows a compositional bias: gly residues; that stretch reads MAMVTGGWGGPGGDT. Positions 1 to 49 are disordered; sequence MAMVTGGWGGPGGDTNGVDKAGGYPRAAEDDSASPPGAASDAEPGDEER. Over residues 33–42 the composition is skewed to low complexity; that stretch reads ASPPGAASDA. A phosphoserine mark is found at serine 34 and serine 40. Positions 53-128 form a DNA-binding region, nuclear receptor; it reads QVDCVVCGDK…VGMRKEAVQR (76 aa). The segment at 56–76 adopts an NR C4-type zinc-finger fold; that stretch reads CVVCGDKSSGKHYGVFTCEGC. Position 83 is a phosphoserine (serine 83). The NR C4-type zinc-finger motif lies at 92–116; it reads CRSNRDCQIDQHHRNQCQYCRLKKC. The NR LBD domain maps to 165-393; it reads PVSELIAQLL…TLIRDMLLSG (229 aa). The tract at residues 327 to 404 is important for dimerization; it reads LQEKAQVALT…TFNWPYGSGQ (78 aa).

Belongs to the nuclear hormone receptor family. NR2 subfamily. Binds DNA as dimer; homodimer and heterodimer with NR2F2 and probably NR2F1. Interacts with THRB. As to expression, expressed in heart, placenta, liver, skeletal muscle, kidney and pancreas.

The protein resides in the nucleus. Functionally, transcription factor predominantly involved in transcriptional repression. Binds to promoter/enhancer response elements that contain the imperfect 5'-AGGTCA-3' direct or inverted repeats with various spacings which are also recognized by other nuclear hormone receptors. Involved in modulation of hormonal responses. Represses transcriptional activity of the lutropin-choriogonadotropic hormone receptor/LHCGR gene, the renin/REN gene and the oxytocin-neurophysin/OXT gene. Represses the triiodothyronine-dependent and -independent transcriptional activity of the thyroid hormone receptor gene in a cell type-specific manner. The corepressing function towards thyroid hormone receptor beta/THRB involves at least in part the inhibition of THRB binding to triiodothyronine response elements (TREs) by NR2F6. Inhibits NFATC transcription factor DNA binding and subsequently its transcriptional activity. Acts as transcriptional repressor of IL-17 expression in Th-17 differentiated CD4(+) T cells and may be involved in induction and/or maintenance of peripheral immunological tolerance and autoimmunity. Involved in development of forebrain circadian clock; is required early in the development of the locus coeruleus (LC). The sequence is that of Nuclear receptor subfamily 2 group F member 6 (NR2F6) from Homo sapiens (Human).